A 276-amino-acid chain; its full sequence is Polyamine aminopropyltransferase (276 aa).

Residues 3–236 (ELWYTEKQTK…GLWTFTIGSK (234 aa)) enclose the PABS domain. Gln32 contributes to the S-methyl-5'-thioadenosine binding site. Positions 63 and 87 each coordinate spermidine. Residues Asp107 and 138–139 (DG) contribute to the S-methyl-5'-thioadenosine site. Asp156 acts as the Proton acceptor in catalysis. A spermidine-binding site is contributed by 156–159 (DSTE). Pro163 serves as a coordination point for S-methyl-5'-thioadenosine.

It belongs to the spermidine/spermine synthase family. Homodimer or homotetramer.

The protein resides in the cytoplasm. The enzyme catalyses S-adenosyl 3-(methylsulfanyl)propylamine + putrescine = S-methyl-5'-thioadenosine + spermidine + H(+). Its pathway is amine and polyamine biosynthesis; spermidine biosynthesis; spermidine from putrescine: step 1/1. Functionally, involved in the cell growth and proliferation. Catalyzes the irreversible transfer of a propylamine group from the amino donor S-adenosylmethioninamine (decarboxy-AdoMet) to putrescine (1,4-diaminobutane) to yield spermidine. This chain is Polyamine aminopropyltransferase, found in Bacillus subtilis (strain 168).